The following is a 142-amino-acid chain: Transcription antitermination protein NusB (142 aa).

Belongs to the NusB family.

Its function is as follows. Involved in transcription antitermination. Required for transcription of ribosomal RNA (rRNA) genes. Binds specifically to the boxA antiterminator sequence of the ribosomal RNA (rrn) operons. This is Transcription antitermination protein NusB from Anaeromyxobacter dehalogenans (strain 2CP-1 / ATCC BAA-258).